A 291-amino-acid chain; its full sequence is Nucleotide-binding protein CMM_1747 (291 aa).

15 to 22 lines the ATP pocket; sequence GMSGAGRS. Residue 66-69 coordinates GTP; that stretch reads DVRG.

The protein belongs to the RapZ-like family.

Displays ATPase and GTPase activities. The polypeptide is Nucleotide-binding protein CMM_1747 (Clavibacter michiganensis subsp. michiganensis (strain NCPPB 382)).